The following is a 135-amino-acid chain: Peptide methionine sulfoxide reductase MsrB (135 aa).

One can recognise a MsrB domain in the interval 13-135 (DADWREQLTP…NGHSMVFEPV (123 aa)). The Zn(2+) site is built by Cys52, Cys55, Cys101, and Cys104. The Nucleophile role is filled by Cys124.

The protein belongs to the MsrB Met sulfoxide reductase family. The cofactor is Zn(2+).

It carries out the reaction L-methionyl-[protein] + [thioredoxin]-disulfide + H2O = L-methionyl-(R)-S-oxide-[protein] + [thioredoxin]-dithiol. The polypeptide is Peptide methionine sulfoxide reductase MsrB (Agrobacterium fabrum (strain C58 / ATCC 33970) (Agrobacterium tumefaciens (strain C58))).